Consider the following 443-residue polypeptide: Thymidine phosphorylase (443 aa).

It belongs to the thymidine/pyrimidine-nucleoside phosphorylase family. In terms of assembly, homodimer.

It carries out the reaction thymidine + phosphate = 2-deoxy-alpha-D-ribose 1-phosphate + thymine. Its pathway is pyrimidine metabolism; dTMP biosynthesis via salvage pathway; dTMP from thymine: step 1/2. The enzymes which catalyze the reversible phosphorolysis of pyrimidine nucleosides are involved in the degradation of these compounds and in their utilization as carbon and energy sources, or in the rescue of pyrimidine bases for nucleotide synthesis. The polypeptide is Thymidine phosphorylase (Aeromonas salmonicida (strain A449)).